The chain runs to 653 residues: Serine/threonine-protein phosphatase with EF-hands 1 (653 aa).

The IQ domain maps to 16 to 45; that stretch reads SLRAALIIQNWYRGYKARLKARQHYALTIF. Positions 121-455 are catalytic; that stretch reads IDLLLEAFKE…PRFFQYQVTK (335 aa). Residues D172, H174, D201, and N233 each contribute to the Mn(2+) site. H234 (proton donor) is an active-site residue. H285 and H403 together coordinate Mn(2+). 3 EF-hand domains span residues 483–518, 566–601, and 606–641; these read SRKS…ILGL, RYRS…FSSH, and IDDS…VHRY. Ca(2+) is bound by residues D579, D581, S583, E590, D619, N621, D623, S625, and E630.

It belongs to the PPP phosphatase family. Mn(2+) serves as cofactor. Requires Mg(2+) as cofactor. In terms of tissue distribution, detected in retina and retinal derived Y-79 retinoblastoma cells. Also found in fetal brain.

The enzyme catalyses O-phospho-L-seryl-[protein] + H2O = L-seryl-[protein] + phosphate. It catalyses the reaction O-phospho-L-threonyl-[protein] + H2O = L-threonyl-[protein] + phosphate. With respect to regulation, activated by calcium. Its function is as follows. May have a role in the recovery or adaptation response of photoreceptors. May have a role in development. This Homo sapiens (Human) protein is Serine/threonine-protein phosphatase with EF-hands 1 (PPEF1).